The chain runs to 218 residues: MGQKINPLGFRLGTTQSHRSLWFAQPKDYSRNLQEDEKIRDCIKNYVQKHMRISSGFQGIARLGIQKRIDLIQVTIYIGSSNLLIEGPTRGIEELRTDVQKKLNSMNRRLNITITRIARPYEQPNILAEYIALQLKNRVSFRKAMKKAIELAEQANTKGIRVQIAGRLNGKEIARVEWIREGRVPLHTIRAKIDYCSYMVQTIYGVLGIKIWIFVDEE.

The region spanning 47–118 is the KH type-2 domain; sequence VQKHMRISSG…RLNITITRIA (72 aa).

Belongs to the universal ribosomal protein uS3 family. Part of the 30S ribosomal subunit.

It is found in the plastid. The protein localises to the chloroplast. In Amborella trichopoda, this protein is Small ribosomal subunit protein uS3c (rps3).